The sequence spans 76 residues: Omega-conotoxin-like TxO1 (76 aa).

An N-terminal signal peptide occupies residues 1-22 (MKLTCVVIVAVLFLTVWTFATA). Residues 23 to 50 (DDSGNGLEKLFSNAHHEMKNPEASKLNE) constitute a propeptide that is removed on maturation. Cystine bridges form between Cys-52/Cys-67, Cys-59/Cys-70, and Cys-66/Cys-75.

This sequence belongs to the conotoxin O1 superfamily. Expressed by the venom duct.

The protein localises to the secreted. In terms of biological role, omega-conotoxins act at presynaptic membranes, they bind and block voltage-gated calcium channels (Cav). In Conus textile (Cloth-of-gold cone), this protein is Omega-conotoxin-like TxO1.